Here is a 328-residue protein sequence, read N- to C-terminus: UDP-glucose 4-epimerase (328 aa).

T119 contacts substrate. Y143 functions as the Proton acceptor in the catalytic mechanism.

This sequence belongs to the NAD(P)-dependent epimerase/dehydratase family. It depends on NAD(+) as a cofactor.

The catalysed reaction is UDP-alpha-D-glucose = UDP-alpha-D-galactose. It functions in the pathway carbohydrate metabolism; galactose metabolism. The protein operates within glycan metabolism; exopolysaccharide biosynthesis. This is UDP-glucose 4-epimerase (exoB) from Rhizobium meliloti (strain 1021) (Ensifer meliloti).